A 512-amino-acid chain; its full sequence is Sodium/proline symporter (512 aa).

13 consecutive transmembrane segments (helical) span residues 16 to 36 (WQTYIMIAVYFLILIVIGFYG), 54 to 74 (IGPYITALSAGASDMSGWMIM), 85 to 105 (LSAMWITIGLTLGAYINYFVV), 139 to 159 (IISGLIIVVFFTLYTHSGFVS), 174 to 194 (FGLILVAFIVIFYTFFGGYLA), 200 to 220 (FFQGVIMLIAMVMVPIVAMMN), 247 to 267 (IGIISLFSWGLGYFGQPHIII), 286 to 306 (ISWMAVGLLGAVAVGLTGIAF), 327 to 347 (VLFHPLVGGFLLAAILAAIMS), 381 to 401 (FVMIGRLSVLVVAIVAIAIAW), 410 to 430 (LVGNAWAGFGASFSPLVLFAL), 438 to 458 (AGAVSGMVSGALVVIVWIAWI), and 467 to 487 (IFGLYEIIPGFIVSVIVTYVV).

This sequence belongs to the sodium:solute symporter (SSF) (TC 2.A.21) family.

It is found in the cell membrane. It catalyses the reaction L-proline(in) + Na(+)(in) = L-proline(out) + Na(+)(out). Its function is as follows. Catalyzes the sodium-dependent uptake of extracellular L-proline. Since most S.aureus strains are L-proline auxotrophs, this transporter may aid the bacterial persistence during an infection of tissues with low proline concentrations. In Staphylococcus aureus (strain USA300), this protein is Sodium/proline symporter (putP).